The sequence spans 249 residues: Ribonuclease PH (249 aa).

Residues Arg86 and 124 to 126 contribute to the phosphate site; that span reads GTR.

It belongs to the RNase PH family. Homohexameric ring arranged as a trimer of dimers.

It carries out the reaction tRNA(n+1) + phosphate = tRNA(n) + a ribonucleoside 5'-diphosphate. Functionally, phosphorolytic 3'-5' exoribonuclease that plays an important role in tRNA 3'-end maturation. Removes nucleotide residues following the 3'-CCA terminus of tRNAs; can also add nucleotides to the ends of RNA molecules by using nucleoside diphosphates as substrates, but this may not be physiologically important. Probably plays a role in initiation of 16S rRNA degradation (leading to ribosome degradation) during starvation. This is Ribonuclease PH from Clostridium botulinum (strain Alaska E43 / Type E3).